The chain runs to 344 residues: Holliday junction branch migration complex subunit RuvB (344 aa).

The large ATPase domain (RuvB-L) stretch occupies residues 4–194 (CLLRFCYNSL…FGITGHMEYY (191 aa)). Residues Leu-33, Arg-34, Gly-75, Lys-78, Thr-79, Thr-80, 141–143 (EDF), Arg-184, Tyr-194, and Arg-231 each bind ATP. Position 79 (Thr-79) interacts with Mg(2+). Positions 195 to 265 (TDIDLTEIVE…ITDKALTMLD (71 aa)) are small ATPAse domain (RuvB-S). A head domain (RuvB-H) region spans residues 268-344 (HEGLDYVDQK…YEHLGYRYTE (77 aa)). DNA is bound by residues Arg-304, Arg-323, Arg-325, and Arg-328.

It belongs to the RuvB family. As to quaternary structure, homohexamer. Forms an RuvA(8)-RuvB(12)-Holliday junction (HJ) complex. HJ DNA is sandwiched between 2 RuvA tetramers; dsDNA enters through RuvA and exits via RuvB. An RuvB hexamer assembles on each DNA strand where it exits the tetramer. Each RuvB hexamer is contacted by two RuvA subunits (via domain III) on 2 adjacent RuvB subunits; this complex drives branch migration. In the full resolvosome a probable DNA-RuvA(4)-RuvB(12)-RuvC(2) complex forms which resolves the HJ.

The protein localises to the cytoplasm. The catalysed reaction is ATP + H2O = ADP + phosphate + H(+). In terms of biological role, the RuvA-RuvB-RuvC complex processes Holliday junction (HJ) DNA during genetic recombination and DNA repair, while the RuvA-RuvB complex plays an important role in the rescue of blocked DNA replication forks via replication fork reversal (RFR). RuvA specifically binds to HJ cruciform DNA, conferring on it an open structure. The RuvB hexamer acts as an ATP-dependent pump, pulling dsDNA into and through the RuvAB complex. RuvB forms 2 homohexamers on either side of HJ DNA bound by 1 or 2 RuvA tetramers; 4 subunits per hexamer contact DNA at a time. Coordinated motions by a converter formed by DNA-disengaged RuvB subunits stimulates ATP hydrolysis and nucleotide exchange. Immobilization of the converter enables RuvB to convert the ATP-contained energy into a lever motion, pulling 2 nucleotides of DNA out of the RuvA tetramer per ATP hydrolyzed, thus driving DNA branch migration. The RuvB motors rotate together with the DNA substrate, which together with the progressing nucleotide cycle form the mechanistic basis for DNA recombination by continuous HJ branch migration. Branch migration allows RuvC to scan DNA until it finds its consensus sequence, where it cleaves and resolves cruciform DNA. This Streptococcus mutans serotype c (strain ATCC 700610 / UA159) protein is Holliday junction branch migration complex subunit RuvB.